A 63-amino-acid chain; its full sequence is Large ribosomal subunit protein bL28 (63 aa).

The protein belongs to the bacterial ribosomal protein bL28 family.

The protein is Large ribosomal subunit protein bL28 of Clostridium perfringens (strain SM101 / Type A).